The following is a 397-amino-acid chain: Elongation factor Tu (397 aa).

In terms of domain architecture, tr-type G spans 10-206 (KPHVNIGTIG…AVDESIPDPV (197 aa)). The interval 19-26 (GHVDHGKT) is G1. 19-26 (GHVDHGKT) serves as a coordination point for GTP. Threonine 26 is a Mg(2+) binding site. The G2 stretch occupies residues 62–66 (GITIN). Residues 83-86 (DAPG) form a G3 region. GTP-binding positions include 83–87 (DAPGH) and 138–141 (NKSD). The G4 stretch occupies residues 138-141 (NKSD). A G5 region spans residues 176 to 178 (SAL).

This sequence belongs to the TRAFAC class translation factor GTPase superfamily. Classic translation factor GTPase family. EF-Tu/EF-1A subfamily. In terms of assembly, monomer.

The protein resides in the cytoplasm. The catalysed reaction is GTP + H2O = GDP + phosphate + H(+). In terms of biological role, GTP hydrolase that promotes the GTP-dependent binding of aminoacyl-tRNA to the A-site of ribosomes during protein biosynthesis. This Mycobacteroides abscessus (strain ATCC 19977 / DSM 44196 / CCUG 20993 / CIP 104536 / JCM 13569 / NCTC 13031 / TMC 1543 / L948) (Mycobacterium abscessus) protein is Elongation factor Tu.